The primary structure comprises 179 residues: Large ribosomal subunit protein uL5 (179 aa).

The protein belongs to the universal ribosomal protein uL5 family. In terms of assembly, part of the 50S ribosomal subunit; part of the 5S rRNA/L5/L18/L25 subcomplex. Contacts the 5S rRNA and the P site tRNA. Forms a bridge to the 30S subunit in the 70S ribosome.

In terms of biological role, this is one of the proteins that bind and probably mediate the attachment of the 5S RNA into the large ribosomal subunit, where it forms part of the central protuberance. In the 70S ribosome it contacts protein S13 of the 30S subunit (bridge B1b), connecting the 2 subunits; this bridge is implicated in subunit movement. Contacts the P site tRNA; the 5S rRNA and some of its associated proteins might help stabilize positioning of ribosome-bound tRNAs. This Ruthia magnifica subsp. Calyptogena magnifica protein is Large ribosomal subunit protein uL5.